A 125-amino-acid chain; its full sequence is Small ribosomal subunit protein uS12 (125 aa).

D89 carries the post-translational modification 3-methylthioaspartic acid.

The protein belongs to the universal ribosomal protein uS12 family. In terms of assembly, part of the 30S ribosomal subunit. Contacts proteins S8 and S17. May interact with IF1 in the 30S initiation complex.

In terms of biological role, with S4 and S5 plays an important role in translational accuracy. Its function is as follows. Interacts with and stabilizes bases of the 16S rRNA that are involved in tRNA selection in the A site and with the mRNA backbone. Located at the interface of the 30S and 50S subunits, it traverses the body of the 30S subunit contacting proteins on the other side and probably holding the rRNA structure together. The combined cluster of proteins S8, S12 and S17 appears to hold together the shoulder and platform of the 30S subunit. In Acidovorax sp. (strain JS42), this protein is Small ribosomal subunit protein uS12.